We begin with the raw amino-acid sequence, 37 residues long: Large ribosomal subunit protein bL36 (37 aa).

Belongs to the bacterial ribosomal protein bL36 family.

The protein is Large ribosomal subunit protein bL36 of Heliobacterium modesticaldum (strain ATCC 51547 / Ice1).